Reading from the N-terminus, the 343-residue chain is Small ribosomal subunit biogenesis GTPase RsgA (343 aa).

In terms of domain architecture, CP-type G spans 116–275 (RGQLKPVAAN…LIDSPGIREF (160 aa)). GTP-binding positions include 163–166 (NKAD) and 217–225 (GQSGVGKSS). Positions 299, 304, 306, and 312 each coordinate Zn(2+).

This sequence belongs to the TRAFAC class YlqF/YawG GTPase family. RsgA subfamily. Monomer. Associates with 30S ribosomal subunit, binds 16S rRNA. The cofactor is Zn(2+).

Its subcellular location is the cytoplasm. In terms of biological role, one of several proteins that assist in the late maturation steps of the functional core of the 30S ribosomal subunit. Helps release RbfA from mature subunits. May play a role in the assembly of ribosomal proteins into the subunit. Circularly permuted GTPase that catalyzes slow GTP hydrolysis, GTPase activity is stimulated by the 30S ribosomal subunit. This chain is Small ribosomal subunit biogenesis GTPase RsgA, found in Pseudomonas syringae pv. tomato (strain ATCC BAA-871 / DC3000).